A 551-amino-acid polypeptide reads, in one-letter code: Formate--tetrahydrofolate ligase (551 aa).

65 to 72 (TPAGEGKT) is a binding site for ATP.

The protein belongs to the formate--tetrahydrofolate ligase family.

The enzyme catalyses (6S)-5,6,7,8-tetrahydrofolate + formate + ATP = (6R)-10-formyltetrahydrofolate + ADP + phosphate. It participates in one-carbon metabolism; tetrahydrofolate interconversion. The protein is Formate--tetrahydrofolate ligase of Thermosipho africanus (strain TCF52B).